Reading from the N-terminus, the 210-residue chain is Putative truncated L-serine dehydratase SDL1 (210 aa).

This sequence belongs to the serine/threonine dehydratase family. Pyridoxal 5'-phosphate is required as a cofactor.

It localises to the cytoplasm. The catalysed reaction is L-serine = pyruvate + NH4(+). It functions in the pathway carbohydrate biosynthesis; gluconeogenesis. The chain is Putative truncated L-serine dehydratase SDL1 (SDL1) from Saccharomyces cerevisiae (strain ATCC 204508 / S288c) (Baker's yeast).